The sequence spans 263 residues: MYTKNLNSLEINEDYQYSRPIIKKPFRHITLTVPSSDIASFNEIFYLEPQYVAQALRLTNTFQAAIDPLTLNFDFEKALQIANGLPNAGITGTLNQSVIQQTIEISVMISQIKEIIRNVLGLVINSTNFWNSVLAAITNTFTNLEPQVDENWIVWRNLSATHTSYYYKILFSIQNEDTGAFMAVLPIAFEITVDVQKQQLLFITIRDSARYEVKMKALTVVQLLDSYNAPIIDVFNVHNYGLYQSNHPNHHILQNLNLNKIKG.

Belongs to the cyt1/cyt2 endotoxin family. Active after proteolytic processing.

In terms of biological role, kills the larvae of dipteran insects by making pores in the epithelial cell membrane of the insect midgut. The polypeptide is Type-2Bb cytolytic delta-endotoxin (cyt2Bb1) (Bacillus thuringiensis subsp. jegathesan).